Consider the following 263-residue polypeptide: Tryptophan synthase alpha chain (263 aa).

Residues Glu50 and Asp61 each act as proton acceptor in the active site.

It belongs to the TrpA family. In terms of assembly, tetramer of two alpha and two beta chains.

It carries out the reaction (1S,2R)-1-C-(indol-3-yl)glycerol 3-phosphate + L-serine = D-glyceraldehyde 3-phosphate + L-tryptophan + H2O. Its pathway is amino-acid biosynthesis; L-tryptophan biosynthesis; L-tryptophan from chorismate: step 5/5. The alpha subunit is responsible for the aldol cleavage of indoleglycerol phosphate to indole and glyceraldehyde 3-phosphate. In Clostridium acetobutylicum (strain ATCC 824 / DSM 792 / JCM 1419 / IAM 19013 / LMG 5710 / NBRC 13948 / NRRL B-527 / VKM B-1787 / 2291 / W), this protein is Tryptophan synthase alpha chain.